The sequence spans 349 residues: Rhodopsin (349 aa).

The Extracellular portion of the chain corresponds to 1 to 33 (TEGPYFYIPMSNATGVVRSPYEYPQYYLVYPAA). Residue N12 is glycosylated (N-linked (GlcNAc...) asparagine). A helical transmembrane segment spans residues 34–58 (FAVLGAYMFFLIIFGFPVNFLTLYV). The Cytoplasmic portion of the chain corresponds to 59–70 (TIEHKKLRTPLN). A helical transmembrane segment spans residues 71–93 (YILLNLAVADLFMVIGGFTTTIY). Topologically, residues 94–107 (TSMHGYFVLGRLGC) are extracellular. The cysteines at positions 107 and 184 are disulfide-linked. The chain crosses the membrane as a helical span at residues 108 to 130 (NLEGFSATLGGMISLWSLVVLAV). A 'Ionic lock' involved in activated form stabilization motif is present at residues 131-133 (ERW). Residues 131-149 (ERWVVVCKPMSNFRFGENH) lie on the Cytoplasmic side of the membrane. A helical membrane pass occupies residues 150-170 (AIMGVTLTWAMGLACTVPPLV). Residues 171 to 199 (GWSRYIPEGMQCSCGIDYYTRAEGFNNES) lie on the Extracellular side of the membrane. N-linked (GlcNAc...) asparagine glycosylation occurs at N197. The chain crosses the membrane as a helical span at residues 200 to 221 (FVLYMFVCHFSFPLVVIFFCYG). Topologically, residues 222-249 (RLLCAVKEAAAAQQESETTQRAEREVTR) are cytoplasmic. Residues 250 to 271 (MVILMVIGFLVCWLPYASVAWY) form a helical membrane-spanning segment. Over 272-283 (IFTHQGSEFGPL) the chain is Extracellular. The helical transmembrane segment at 284–305 (FMTIPAFFAKSSAIYNPVIYIC) threads the bilayer. The residue at position 293 (K293) is an N6-(retinylidene)lysine. Residues 306-349 (LNKQFRQCMLTTLFCGKNPFEEEEGASSTKTEASSASSSSVSPA) lie on the Cytoplasmic side of the membrane. C320 carries S-palmitoyl cysteine lipidation. Residues 326-349 (EEEEGASSTKTEASSASSSSVSPA) are disordered. Residues 331 to 349 (ASSTKTEASSASSSSVSPA) show a composition bias toward low complexity.

This sequence belongs to the G-protein coupled receptor 1 family. Opsin subfamily. Phosphorylated on some or all of the serine and threonine residues present in the C-terminal region. Post-translationally, contains one covalently linked retinal chromophore.

The protein localises to the membrane. It is found in the cell projection. The protein resides in the cilium. Its subcellular location is the photoreceptor outer segment. Photoreceptor required for image-forming vision at low light intensity. While most salt water fish species use retinal as chromophore, most freshwater fish use 3-dehydroretinal, or a mixture of retinal and 3-dehydroretinal. Light-induced isomerization of 11-cis to all-trans retinal triggers a conformational change that activates signaling via G-proteins. Subsequent receptor phosphorylation mediates displacement of the bound G-protein alpha subunit by arrestin and terminates signaling. The polypeptide is Rhodopsin (rho) (Myripristis berndti (Bigscale soldierfish)).